The following is a 387-amino-acid chain: 3-ketoacyl-CoA thiolase (387 aa).

Residue C91 is the Acyl-thioester intermediate of the active site. Catalysis depends on proton acceptor residues H343 and C373.

Belongs to the thiolase-like superfamily. Thiolase family. As to quaternary structure, heterotetramer of two alpha chains (FadB) and two beta chains (FadA).

It localises to the cytoplasm. It carries out the reaction an acyl-CoA + acetyl-CoA = a 3-oxoacyl-CoA + CoA. The protein operates within lipid metabolism; fatty acid beta-oxidation. In terms of biological role, catalyzes the final step of fatty acid oxidation in which acetyl-CoA is released and the CoA ester of a fatty acid two carbons shorter is formed. This Shewanella loihica (strain ATCC BAA-1088 / PV-4) protein is 3-ketoacyl-CoA thiolase.